A 299-amino-acid chain; its full sequence is Class II hydrophobin C (299 aa).

Positions Met1–Ala17 are cleaved as a signal peptide. Residues Asn39, Asn78, and Asn91 are each glycosylated (N-linked (GlcNAc...) asparagine). Disulfide bonds link Cys232/Cys281, Cys242/Cys272, Cys243/Cys255, and Cys282/Cys293.

The protein belongs to the cerato-ulmin hydrophobin family.

It localises to the secreted. The protein resides in the cell wall. It is found in the vacuole. Its subcellular location is the cytoplasmic vesicle. Functionally, aerial growth, conidiation, and dispersal of filamentous fungi in the environment rely upon a capability of their secreting small amphipathic proteins called hydrophobins (HPBs) with low sequence identity. Class I can self-assemble into an outermost layer of rodlet bundles on aerial cell surfaces, conferring cellular hydrophobicity that supports fungal growth, development and dispersal; whereas Class II form highly ordered films at water-air interfaces through intermolecular interactions but contribute nothing to the rodlet structure. Hyd2C contributes to certain cell wall-related features, such as hydrophobicity but is not involved in cell wall-related events during fungal proliferation in host hemocoel. Does not contribute to conidial hydrophobicity. Involved actively in the asexual development. The chain is Class II hydrophobin C from Beauveria bassiana (strain ARSEF 2860) (White muscardine disease fungus).